The primary structure comprises 549 residues: Leucine-rich repeat, immunoglobulin-like domain and transmembrane domain-containing protein 2 (549 aa).

Positions 1-22 (MAFVFYCFLQVLVSWVIHAVQP) are cleaved as a signal peptide. The LRRNT domain maps to 23–54 (FCLPECTCSEESFGRSLQCMSMSLGKIPDNFP). LRR repeat units lie at residues 80–103 (SLEY…EDLP), 104–125 (ELRE…AFRA), 128–149 (LLRV…ALQF), and 152–173 (NLIY…VFLN). An N-linked (GlcNAc...) asparagine glycan is attached at Asn90. An LRRCT domain is found at 200–252 (NPWLCDCRLRGLAQFVKSVGPPFILVNSYLVCQGPVSKAGQLLHETELGVCMK). The Ig-like domain maps to 253–339 (PTISTPSVNV…FNSIGRSSLV (87 aa)). An N-linked (GlcNAc...) asparagine glycan is attached at Asn261. Residues Cys274 and Cys327 are joined by a disulfide bond. Residues 361 to 447 (EVSAYVDLRV…QPPSQGQCVV (87 aa)) form the Fibronectin type-III domain. A helical transmembrane segment spans residues 463–483 (LLHVTVVLCAVLLALPVGAYV). Asn491 carries N-linked (GlcNAc...) asparagine glycosylation. The disordered stretch occupies residues 521 to 549 (FKDPSGVYEDGESHRVMEEDEEVEKEGIS). Residues 538–549 (EEDEEVEKEGIS) show a composition bias toward acidic residues.

In terms of assembly, interacts with LRIT1; may form a heterodimer with LRIT1.

It localises to the membrane. The protein is Leucine-rich repeat, immunoglobulin-like domain and transmembrane domain-containing protein 2 (Lrit2) of Mus musculus (Mouse).